The following is a 322-amino-acid chain: Aldo-keto reductase family 1 member C13 (322 aa).

NAD(+) contacts are provided by residues 20-24 (GFGTY) and Asp50. Tyr55 acts as the Proton donor in catalysis. His117 lines the substrate pocket. Residues 166–167 (SN), Gln190, 216–224 (FGALGTQRY), and 270–280 (QSFYESEMKEN) contribute to the NAD(+) site.

This sequence belongs to the aldo/keto reductase family. Monomer. The N-terminus is blocked.

It carries out the reaction morphine + NAD(+) = morphinone + NADH + H(+). It catalyses the reaction morphine + NADP(+) = morphinone + NADPH + H(+). Its activity is regulated as follows. Strongly inhibited by sulfhydryl reagents and ketamine, but not by pyrazole, barbital and indomethacine. Catalyzes the dehydrogenation of morphine to morphinone. The enzyme also exhibits significant activity for a variety of cyclic and alicyclic alcohols. In addition to xenobiotics, the enzyme catalyzes the dehydrogenation of 17-beta-hydroxysteroids with much higher affinities than morphine. Uses both NAD and NADP, but the activity is much greater with NAD than with NADP. The polypeptide is Aldo-keto reductase family 1 member C13 (AKR1C13) (Mesocricetus auratus (Golden hamster)).